A 360-amino-acid chain; its full sequence is Putative F-box protein At3g47150 (360 aa).

Residues 6 to 56 (NTTQIYIPLDLQINILLRLPVKSLLRFRCVSKLWCSIITSHDFRNRHFNIT) enclose the F-box domain.

The protein is Putative F-box protein At3g47150 of Arabidopsis thaliana (Mouse-ear cress).